We begin with the raw amino-acid sequence, 628 residues long: Protein SDS23 (628 aa).

The interval 1-126 (MVNPPQPRQM…NKSSSQSIAP (126 aa)) is disordered. The segment covering 15 to 24 (RLSTSTSSGP) has biased composition (polar residues). Low complexity-rich tracts occupy residues 40–71 (QLQHQPSSASTSSTTSTATTGGSISATAPGST) and 109–123 (SRHASTSSNKSSSQS). CBS domains follow at residues 258-319 (LHPK…RFPS) and 334-392 (GSSN…SHLL). The tract at residues 551–609 (GRRTDPQAARNQRRRSSTSTTRSSIDSALSAEGILPSGSAIIGSSNAANTGRRGSVEVS) is disordered. Low complexity predominate over residues 587–599 (SGSAIIGSSNAAN).

It belongs to the SDS23 family.

The protein resides in the cytoplasm. It localises to the nucleus. Its function is as follows. Involved in DNA replication and cell separation. This Candida albicans (strain SC5314 / ATCC MYA-2876) (Yeast) protein is Protein SDS23 (SDS24).